A 225-amino-acid polypeptide reads, in one-letter code: UPF0758 protein NMB1038 (225 aa).

The MPN domain maps to 102 to 224; it reads VLSDPDTVAD…VCSFRQLGLM (123 aa). Positions 173, 175, and 186 each coordinate Zn(2+). Residues 173-186 carry the JAMM motif motif; it reads HNHPGGSPEPSQED.

The protein belongs to the UPF0758 family.

In Neisseria meningitidis serogroup B (strain ATCC BAA-335 / MC58), this protein is UPF0758 protein NMB1038.